The primary structure comprises 305 residues: Probable 5-dehydro-4-deoxyglucarate dehydratase (305 aa).

It belongs to the DapA family.

The enzyme catalyses 5-dehydro-4-deoxy-D-glucarate + H(+) = 2,5-dioxopentanoate + CO2 + H2O. It functions in the pathway carbohydrate acid metabolism; D-glucarate degradation; 2,5-dioxopentanoate from D-glucarate: step 2/2. This Xanthomonas campestris pv. campestris (strain B100) protein is Probable 5-dehydro-4-deoxyglucarate dehydratase.